The primary structure comprises 153 residues: Ribosome maturation factor RimP (153 aa).

The protein belongs to the RimP family.

The protein localises to the cytoplasm. In terms of biological role, required for maturation of 30S ribosomal subunits. The protein is Ribosome maturation factor RimP of Psychromonas ingrahamii (strain DSM 17664 / CCUG 51855 / 37).